The following is a 270-amino-acid chain: Putative pyruvate, phosphate dikinase regulatory protein (270 aa).

148–155 (GISRTSKT) lines the ADP pocket.

It belongs to the pyruvate, phosphate/water dikinase regulatory protein family. PDRP subfamily.

It catalyses the reaction N(tele)-phospho-L-histidyl/L-threonyl-[pyruvate, phosphate dikinase] + ADP = N(tele)-phospho-L-histidyl/O-phospho-L-threonyl-[pyruvate, phosphate dikinase] + AMP + H(+). The catalysed reaction is N(tele)-phospho-L-histidyl/O-phospho-L-threonyl-[pyruvate, phosphate dikinase] + phosphate + H(+) = N(tele)-phospho-L-histidyl/L-threonyl-[pyruvate, phosphate dikinase] + diphosphate. Its function is as follows. Bifunctional serine/threonine kinase and phosphorylase involved in the regulation of the pyruvate, phosphate dikinase (PPDK) by catalyzing its phosphorylation/dephosphorylation. This Bacillus cereus (strain 03BB102) protein is Putative pyruvate, phosphate dikinase regulatory protein.